Here is a 120-residue protein sequence, read N- to C-terminus: Large ribosomal subunit protein eL8 (120 aa).

It belongs to the eukaryotic ribosomal protein eL8 family. As to quaternary structure, part of the 50S ribosomal subunit. Probably part of the RNase P complex.

The protein resides in the cytoplasm. In terms of biological role, multifunctional RNA-binding protein that recognizes the K-turn motif in ribosomal RNA, the RNA component of RNase P, box H/ACA, box C/D and box C'/D' sRNAs. The protein is Large ribosomal subunit protein eL8 of Natronomonas pharaonis (strain ATCC 35678 / DSM 2160 / CIP 103997 / JCM 8858 / NBRC 14720 / NCIMB 2260 / Gabara) (Halobacterium pharaonis).